We begin with the raw amino-acid sequence, 188 residues long: Adenine phosphoribosyltransferase (188 aa).

This sequence belongs to the purine/pyrimidine phosphoribosyltransferase family. Homodimer.

Its subcellular location is the cytoplasm. The catalysed reaction is AMP + diphosphate = 5-phospho-alpha-D-ribose 1-diphosphate + adenine. It functions in the pathway purine metabolism; AMP biosynthesis via salvage pathway; AMP from adenine: step 1/1. Catalyzes a salvage reaction resulting in the formation of AMP, that is energically less costly than de novo synthesis. The polypeptide is Adenine phosphoribosyltransferase (Burkholderia ambifaria (strain MC40-6)).